Reading from the N-terminus, the 286-residue chain is Translocon-associated protein subunit alpha (286 aa).

The N-terminal stretch at 1-21 (MRLLPRLLLLFLLAFPAAVLL) is a signal peptide. At 22 to 207 (RGGPGGSLAL…EREDGLDGET (186 aa)) the chain is on the lumenal side. The span at 46–75 (IIEDEDDEAEVEEDEPTDLAEDKEEEDVSS) shows a compositional bias: acidic residues. Positions 46–83 (IIEDEDDEAEVEEDEPTDLAEDKEEEDVSSEPEASPSA) are disordered. N-linked (GlcNAc...) asparagine glycosylation is found at Asn-136 and Asn-191. The helical transmembrane segment at 208–228 (IFMYMFLAGLGLLVVVGLHQL) threads the bilayer. Residues 229 to 286 (LESRKRKRPIQKVEMGTSSQNDVDMSWIPQETLNQINKASPRRQPRKRAQKRSVGSDE) are Cytoplasmic-facing. Residues 236-286 (RPIQKVEMGTSSQNDVDMSWIPQETLNQINKASPRRQPRKRAQKRSVGSDE) form a disordered region. The span at 244–266 (GTSSQNDVDMSWIPQETLNQINK) shows a compositional bias: polar residues. Ser-247 carries the post-translational modification Phosphoserine. Residue Thr-260 is modified to Phosphothreonine. Ser-268 bears the Phosphoserine mark. Over residues 268–279 (SPRRQPRKRAQK) the composition is skewed to basic residues.

The protein belongs to the TRAP-alpha family. Heterotetramer of TRAP-alpha, TRAP-beta, TRAP-delta and TRAP-gamma. Interacts with palmitoylated calnexin (CALX), the interaction is required for efficient folding of glycosylated proteins.

Its subcellular location is the endoplasmic reticulum membrane. Functionally, TRAP proteins are part of a complex whose function is to bind calcium to the ER membrane and thereby regulate the retention of ER resident proteins. May be involved in the recycling of the translocation apparatus after completion of the translocation process or may function as a membrane-bound chaperone facilitating folding of translocated proteins. This is Translocon-associated protein subunit alpha (Ssr1) from Mus musculus (Mouse).